We begin with the raw amino-acid sequence, 593 residues long: Probable serine/threonine-protein kinase fhkA (593 aa).

The disordered stretch occupies residues 1–24 (MSQTNYIPSTPNKSTPPSELSSTP). Residues 54–111 (ITIGRSKTCNIVVPELIVSGKHCIITRADAIENGNTNYGLLMIQDQSTNGTFINGKLI) form the FHA domain. In terms of domain architecture, Protein kinase spans 180-472 (YDFIKELGSG…VEQALNHPWI (293 aa)). ATP-binding positions include 186-194 (LGSGNFSVV) and Lys209. Asp307 functions as the Proton acceptor in the catalytic mechanism.

It belongs to the protein kinase superfamily. CAMK Ser/Thr protein kinase family. CHK2 subfamily.

It carries out the reaction L-seryl-[protein] + ATP = O-phospho-L-seryl-[protein] + ADP + H(+). The enzyme catalyses L-threonyl-[protein] + ATP = O-phospho-L-threonyl-[protein] + ADP + H(+). The protein is Probable serine/threonine-protein kinase fhkA (fhkA) of Dictyostelium discoideum (Social amoeba).